Reading from the N-terminus, the 358-residue chain is Cilia- and flagella-associated protein 263 (358 aa).

Coiled coils occupy residues 93–138, 176–200, and 266–343; these read YKKM…FKRN, RKNSALLTHKKKQQAQLRQQEEMAE, and RTKL…YTKS.

It belongs to the CFAP263 family. As to quaternary structure, forms a complex with CFAP184; the interaction is required for functional activity in cilia. Interacts with HAP1 and PCM1.

The protein localises to the cytoplasm. Its subcellular location is the cytoskeleton. It is found in the microtubule organizing center. It localises to the centrosome. The protein resides in the centriolar satellite. The protein localises to the cell projection. Its subcellular location is the cilium. Component of centriolar satellites contributing to primary cilium formation. In complex with CFAP263, acts as a regulator of ciliary beating that connects radial spoke 3 (RS3) to the inner dynein arm (IDA) and the nexin-dynein regulatory complex (N-DRC). The complex is positioned parallel to N-DRC and forms a connection between the arch at the base of RS3, the IDA tail and N-DRC. The sequence is that of Cilia- and flagella-associated protein 263 (cfap263) from Danio rerio (Zebrafish).